Consider the following 82-residue polypeptide: ATP synthase subunit 9, mitochondrial (82 aa).

2 helical membrane-spanning segments follow: residues I8 to F28 and S45 to A67.

This sequence belongs to the ATPase C chain family. In terms of assembly, F-type ATPases have 2 components, CF(1) - the catalytic core - and CF(0) - the membrane proton channel. CF(1) has five subunits: alpha(3), beta(3), gamma(1), delta(1), epsilon(1). CF(0) has three main subunits: a, b and c.

The protein resides in the mitochondrion membrane. In terms of biological role, this protein is one of the chains of the nonenzymatic membrane component (F0) of mitochondrial ATPase. In Malus domestica (Apple), this protein is ATP synthase subunit 9, mitochondrial (ATP9).